The following is a 784-amino-acid chain: MSDVLSNDLMQKMDAYWRAANYLSVGQIYLQDNPLLEQPLQLEHIKPRLLGHWGTTPGLNLLYVHLNRLITEHDLDMIYIIGPGHGGPGLVANSYLEGSYTERYPAIERNRNGLQRLFRQFSWPHGVPSHVSPETPGSIHEGGELGYSLAHAYGAAFDNPDLIVACIVGDGEAETGALATSWHSNKFLNPARDGAVLPILHLNGFKIANPTVLARISRQELTDLMRGYGYEPIVVEGDEPALVHHALAAALDRALADIQAIQAAARHQGVTARPRWPMIILRTPKGWTGPKQVDGKQVEGTWRAHQVPIADFKDPAHVQLLETWLRSYRPEELFDANGKFRDELAALAPTGHCRMSANPHANGGELLQPLSLPDFRNYAVALSAPGAAKAEATRALGTFLRDVMRDNLETKNFRLFGPDETASNRLDGVLEVTDKQWMADIEDVDIALGPDGRVMEVLSEHLCQGWLEGYLLTGRHGLFSCYEAFIHIIDSMFNQHAKWLKACDAIPWRRPIASLNYLLTSHVWRQDHNGFSHQDPGFIDHVVNKKASVVRVYLPPDANCLLSVADHCLRSRNYVNLIVAGKQPEWQWLDIDAAVRHCTAGAGIWHWASNDDGDPDVVMACAGDVPTVETLAAVMLLREYVPDIRIRVVNVVDLMVLQPSSEHPHGLDDRRFDELFTVDKPVVFAFHGYPWLIHRLTYRRRNHFNIHVRGYKEEGSTTTPFDMVVLNDLDRYRLALDAIRRIPRLAGQVESATDRYWATMQRHKLYIGEHGDDMPEIRDWRWQA.

The protein belongs to the XFP family. The cofactor is thiamine diphosphate.

This is Probable phosphoketolase from Rhodopseudomonas palustris (strain HaA2).